A 471-amino-acid chain; its full sequence is MKIKTRFAPSPTGYLHVGGARTALYSWLFARNHGGEFVLRIEDTDLERSTPEAIEAIMDGMNWLSLEWDEGPYYQTKRFDRYNAVIDQMLEEGTAYKCYCSKERLEALREEQMAKGEKPRYDGRCRHSHEHHADDEPCVVRFANPQEGSVVFDDQIRGPIEFSNQELDDLIIRRTDGSPTYNFCVVVDDWDMEITHVIRGEDHINNTPRQINILKALKAPVPVYAHVSMINGDDGKKLSKRHGAVSVMQYRDDGYLPEALLNYLVRLGWSHGDQEIFTREEMIKYFTLNAVSKSASAFNTDKLLWLNHHYINALPPEYVATHLQWHIEQENIDTRNGPQLADLVKLLGERCKTLKEMAQSCRYFYEDFAEFDADAAKKHLRPVARQPLEVVRDKLAAITDWTAENVHHAIQATADELEVGMGKVGMPLRVAVTGAGRSPALDVTVHAIGKTRSIERINKALDFIAERENQQ.

The 'HIGH' region motif lies at proline 9 to glycine 19. Positions 98, 100, 125, and 127 each coordinate Zn(2+). Residues lysine 237–arginine 241 carry the 'KMSKS' region motif. Lysine 240 is an ATP binding site.

Belongs to the class-I aminoacyl-tRNA synthetase family. Glutamate--tRNA ligase type 1 subfamily. In terms of assembly, monomer. Zn(2+) serves as cofactor.

It is found in the cytoplasm. The enzyme catalyses tRNA(Glu) + L-glutamate + ATP = L-glutamyl-tRNA(Glu) + AMP + diphosphate. In terms of biological role, catalyzes the attachment of glutamate to tRNA(Glu) in a two-step reaction: glutamate is first activated by ATP to form Glu-AMP and then transferred to the acceptor end of tRNA(Glu). The polypeptide is Glutamate--tRNA ligase (Shigella sonnei (strain Ss046)).